A 269-amino-acid chain; its full sequence is Lysyl endopeptidase (269 aa).

Cystine bridges form between C6-C216, C12-C80, and C36-C58. Active-site charge relay system residues include H57, D113, and S194.

This sequence belongs to the peptidase S1 family.

Its subcellular location is the secreted. The catalysed reaction is Preferential cleavage: Lys-|-Xaa, including Lys-|-Pro.. Highly specific endopeptidase that hydrolyzes lysyl bonds including the Lys-Pro bond. This is Lysyl endopeptidase from Lysobacter enzymogenes.